A 99-amino-acid polypeptide reads, in one-letter code: DNA-directed RNA polymerase subunit omega (99 aa).

Residues 55 to 99 (EAGTVISDPNPEEKRERLRIEREERKRQREQEQKELENRLRDEKN) form a disordered region. Residues 65-99 (PEEKRERLRIEREERKRQREQEQKELENRLRDEKN) show a composition bias toward basic and acidic residues.

Belongs to the RNA polymerase subunit omega family. In terms of assembly, the RNAP catalytic core consists of 2 alpha, 1 beta, 1 beta' and 1 omega subunit. When a sigma factor is associated with the core the holoenzyme is formed, which can initiate transcription.

It carries out the reaction RNA(n) + a ribonucleoside 5'-triphosphate = RNA(n+1) + diphosphate. In terms of biological role, promotes RNA polymerase assembly. Latches the N- and C-terminal regions of the beta' subunit thereby facilitating its interaction with the beta and alpha subunits. The protein is DNA-directed RNA polymerase subunit omega of Enterococcus faecalis (strain ATCC 700802 / V583).